Reading from the N-terminus, the 167-residue chain is UPF0114 protein in repA1-repA2 intergenic region (167 aa).

3 helical membrane-spanning segments follow: residues 15–35 (LMFP…LKFF), 53–73 (LVLI…LVMV), and 136–156 (IILC…MAYI).

The protein belongs to the UPF0114 family.

The protein localises to the cell membrane. This chain is UPF0114 protein in repA1-repA2 intergenic region, found in Buchnera aphidicola subsp. Pterocomma populeum.